We begin with the raw amino-acid sequence, 218 residues long: Small ribosomal subunit protein uS3 (218 aa).

Residues 2 to 71 enclose the KH type-2 domain; sequence SAPQRRLPVY…IGRKGAIVKE (70 aa).

Belongs to the universal ribosomal protein uS3 family. As to quaternary structure, part of the 30S ribosomal subunit.

Its function is as follows. Binds the lower part of the 30S subunit head. The polypeptide is Small ribosomal subunit protein uS3 (Pyrobaculum aerophilum (strain ATCC 51768 / DSM 7523 / JCM 9630 / CIP 104966 / NBRC 100827 / IM2)).